A 95-amino-acid polypeptide reads, in one-letter code: Integration host factor subunit beta (95 aa).

Belongs to the bacterial histone-like protein family. As to quaternary structure, heterodimer of an alpha and a beta chain.

In terms of biological role, this protein is one of the two subunits of integration host factor, a specific DNA-binding protein that functions in genetic recombination as well as in transcriptional and translational control. The chain is Integration host factor subunit beta from Erwinia tasmaniensis (strain DSM 17950 / CFBP 7177 / CIP 109463 / NCPPB 4357 / Et1/99).